The chain runs to 115 residues: NADH-ubiquinone oxidoreductase chain 3 (115 aa).

3 consecutive transmembrane segments (helical) span residues 3–23 (FVLI…ITFW), 55–75 (FFLV…LLPL), and 84–104 (LPLM…SLAY).

Belongs to the complex I subunit 3 family. In terms of assembly, core subunit of respiratory chain NADH dehydrogenase (Complex I) which is composed of 45 different subunits. Interacts with TMEM186. Interacts with TMEM242.

It localises to the mitochondrion inner membrane. It carries out the reaction a ubiquinone + NADH + 5 H(+)(in) = a ubiquinol + NAD(+) + 4 H(+)(out). Functionally, core subunit of the mitochondrial membrane respiratory chain NADH dehydrogenase (Complex I) which catalyzes electron transfer from NADH through the respiratory chain, using ubiquinone as an electron acceptor. Essential for the catalytic activity of complex I. The sequence is that of NADH-ubiquinone oxidoreductase chain 3 from Pan paniscus (Pygmy chimpanzee).